We begin with the raw amino-acid sequence, 562 residues long: Bacillolysin (562 aa).

The signal sequence occupies residues 1–24; it reads MKKKKQALKVLLSVGILSSSFAFA. Positions 25-245 are cleaved as a propeptide — activation peptide; the sequence is HTSSAAPNNV…KQAAKPAAKP (221 aa). Positions 303, 305, and 384 each coordinate Ca(2+). His-388 contributes to the Zn(2+) binding site. Residue Glu-389 is part of the active site. Positions 392 and 412 each coordinate Zn(2+). Ca(2+) contacts are provided by Glu-423, Asn-429, Asp-431, Glu-433, Glu-436, Tyr-439, Thr-440, and Asp-446. The Proton donor role is filled by His-477.

The protein belongs to the peptidase M4 family. Requires Ca(2+) as cofactor. Zn(2+) serves as cofactor.

It localises to the secreted. It carries out the reaction Similar, but not identical, to that of thermolysin.. Extracellular zinc metalloprotease. This is Bacillolysin (nprM) from Priestia megaterium (strain DSM 319 / IMG 1521) (Bacillus megaterium).